The chain runs to 656 residues: Kinesin-related protein SMY1 (656 aa).

In terms of domain architecture, Kinesin motor spans 27-364 (HIEVILRAIP…LEFGDSIRQI (338 aa)). 114–121 (GPSFSGKS) is an ATP binding site. Phosphothreonine is present on Thr583.

Belongs to the TRAFAC class myosin-kinesin ATPase superfamily. Kinesin family.

Its subcellular location is the cytoplasm. It localises to the cytoskeleton. Its function is as follows. Possible microtubule-based motor that can interact or substitute with myosin 2 (MYO2). The sequence is that of Kinesin-related protein SMY1 (SMY1) from Saccharomyces cerevisiae (strain ATCC 204508 / S288c) (Baker's yeast).